A 287-amino-acid chain; its full sequence is 4-diphosphocytidyl-2-C-methyl-D-erythritol kinase (287 aa).

Lys-12 is a catalytic residue. Position 97–107 (97–107 (PMGGGLGGGSS)) interacts with ATP. The active site involves Asp-139.

The protein belongs to the GHMP kinase family. IspE subfamily.

The catalysed reaction is 4-CDP-2-C-methyl-D-erythritol + ATP = 4-CDP-2-C-methyl-D-erythritol 2-phosphate + ADP + H(+). The protein operates within isoprenoid biosynthesis; isopentenyl diphosphate biosynthesis via DXP pathway; isopentenyl diphosphate from 1-deoxy-D-xylulose 5-phosphate: step 3/6. Its function is as follows. Catalyzes the phosphorylation of the position 2 hydroxy group of 4-diphosphocytidyl-2C-methyl-D-erythritol. The polypeptide is 4-diphosphocytidyl-2-C-methyl-D-erythritol kinase (Marinobacter nauticus (strain ATCC 700491 / DSM 11845 / VT8) (Marinobacter aquaeolei)).